A 504-amino-acid polypeptide reads, in one-letter code: Probable cytochrome P450 513E1 (504 aa).

The chain crosses the membrane as a helical span at residues 1–21 (MNLYISILILIISLIIFFKNN). Cysteine 450 contacts heme.

This sequence belongs to the cytochrome P450 family. Heme is required as a cofactor.

The protein localises to the membrane. This is Probable cytochrome P450 513E1 (cyp513E1) from Dictyostelium discoideum (Social amoeba).